A 521-amino-acid chain; its full sequence is BAR/IMD domain-containing adapter protein 2 (521 aa).

The region spanning 1 to 250 (MSLSRSEEMH…VQLMQQIASS (250 aa)) is the IMD domain. Residues 132-153 (DALDKCQAELKKLRKKSQGSKN) are a coiled coil. S262, S324, S326, and S337 each carry phosphoserine. The tract at residues 299-370 (VMNGVAGPDS…TLPRSSSMAA (72 aa)) is disordered. Over residues 321-335 (QPKSLSPPQSQSKLS) the composition is skewed to low complexity. T341 is subject to Phosphothreonine. Phosphoserine is present on S347. Residues 349 to 368 (TPKNSYATTENKTLPRSSSM) show a composition bias toward polar residues. T361 is modified (phosphothreonine). Residues S367, S385, S396, and S455 each carry the phosphoserine modification. In terms of domain architecture, SH3 spans 375–438 (NGRMRVKAIF…PFSYTRVLDS (64 aa)). Residues 445–480 (HMSLQQGKSSSTGNLLDKDDLAVPPPDYGTSSRAFP) form a disordered region. Residues 447–458 (SLQQGKSSSTGN) are compositionally biased toward polar residues.

In terms of assembly, homodimer. Interacts with CDC42 and RAC1 that have been activated by GTP binding. Interacts with ATN1, ADGRB1, DIAPH1, EPS8, SHANK1, SHANK2, SHANK3, TIAM1, WASF1 and WASF2. Interacts with ENAH after recruitment of CDC42. In terms of processing, phosphorylated on tyrosine residues by INSR in response to insulin treatment.

It is found in the cytoplasm. It localises to the membrane. Its subcellular location is the cell projection. The protein resides in the filopodium. The protein localises to the ruffle. It is found in the cytoskeleton. Adapter protein that links membrane-bound small G-proteins to cytoplasmic effector proteins. Necessary for CDC42-mediated reorganization of the actin cytoskeleton and for RAC1-mediated membrane ruffling. Involved in the regulation of the actin cytoskeleton by WASF family members and the Arp2/3 complex. Plays a role in neurite growth. Acts syngeristically with ENAH to promote filipodia formation. Plays a role in the reorganization of the actin cytoskeleton in response to bacterial infection. Participates in actin bundling when associated with EPS8, promoting filopodial protrusions. The chain is BAR/IMD domain-containing adapter protein 2 (BAIAP2) from Cricetulus griseus (Chinese hamster).